Consider the following 950-residue polypeptide: Protocadherin alpha-6 (950 aa).

The first 29 residues, Met1–Gly29, serve as a signal peptide directing secretion. Over Gln30–Asn697 the chain is Extracellular. 6 consecutive Cadherin domains span residues Ser34–Phe133, Ala157–Phe242, Glu243–Ile350, Ala351–Phe455, Ala456–Leu565, and Val581–Ala678. 4 N-linked (GlcNAc...) asparagine glycosylation sites follow: Asn257, Asn265, Asn386, and Asn548. Residues Val698–Tyr718 traverse the membrane as a helical segment. Residues Thr719–Gln950 lie on the Cytoplasmic side of the membrane. PXXP repeat units follow at residues Pro799–Pro802, Pro832–Pro835, Pro873–Pro876, and Pro891–Pro894. The tract at residues Pro799–Pro894 is 4 X 4 AA repeats of P-X-X-P. Residues Ala830 to Ile889 are disordered. Residues Gln901 to Gln950 form a disordered region. Residues Asp909 to Lys923 show a composition bias toward basic and acidic residues.

The protein localises to the cell membrane. Its function is as follows. Potential calcium-dependent cell-adhesion protein. May be involved in the establishment and maintenance of specific neuronal connections in the brain. The polypeptide is Protocadherin alpha-6 (PCDHA6) (Pan troglodytes (Chimpanzee)).